A 602-amino-acid chain; its full sequence is Carbon catabolite repressor protein 4 homolog 1 (602 aa).

Positions 113-136 are disordered; the sequence is ASAATEGNDEEELPRLNSSGSGSG. Residue E299 coordinates Mg(2+).

This sequence belongs to the CCR4/nocturin family. As to quaternary structure, component of the CCR4-NOT complex, at least composed of CRR4 and CAF1 proteins. It depends on Mg(2+) as a cofactor.

The protein localises to the nucleus. Its subcellular location is the cytoplasm. It carries out the reaction Exonucleolytic cleavage of poly(A) to 5'-AMP.. Its function is as follows. Acts as a catalytic component of the CCR4-NOT core complex, which in the nucleus seems to be a general transcription factor, and in the cytoplasm the major mRNA deadenylase involved in mRNA turnover. This chain is Carbon catabolite repressor protein 4 homolog 1 (CCR4-1), found in Arabidopsis thaliana (Mouse-ear cress).